We begin with the raw amino-acid sequence, 415 residues long: Serine hydroxymethyltransferase (415 aa).

(6S)-5,6,7,8-tetrahydrofolate contacts are provided by residues Leu119 and 123–125 (GHL). Residue Lys228 is modified to N6-(pyridoxal phosphate)lysine.

Belongs to the SHMT family. Homodimer. Requires pyridoxal 5'-phosphate as cofactor.

It is found in the cytoplasm. It catalyses the reaction (6R)-5,10-methylene-5,6,7,8-tetrahydrofolate + glycine + H2O = (6S)-5,6,7,8-tetrahydrofolate + L-serine. It participates in one-carbon metabolism; tetrahydrofolate interconversion. The protein operates within amino-acid biosynthesis; glycine biosynthesis; glycine from L-serine: step 1/1. In terms of biological role, catalyzes the reversible interconversion of serine and glycine with tetrahydrofolate (THF) serving as the one-carbon carrier. This reaction serves as the major source of one-carbon groups required for the biosynthesis of purines, thymidylate, methionine, and other important biomolecules. Also exhibits THF-independent aldolase activity toward beta-hydroxyamino acids, producing glycine and aldehydes, via a retro-aldol mechanism. In Coprothermobacter proteolyticus (strain ATCC 35245 / DSM 5265 / OCM 4 / BT), this protein is Serine hydroxymethyltransferase.